The chain runs to 421 residues: Esterase LipQ (421 aa).

Residues serine 249, aspartate 344, and histidine 377 contribute to the active site.

The protein belongs to the 'GDXG' lipolytic enzyme family.

It carries out the reaction hexadecanoate ester + H2O = an aliphatic alcohol + hexadecanoate + H(+). In terms of biological role, shows lipase activity. Is highly immunogenic and may play an important role in the virulence and pathogenesis of M.tuberculosis infection, by altering the balance of cytokines. Significantly down-regulates the expression level of pro-inflammatory cytokines (TNF-alpha and IFN-gamma) and up-regulates the level of anti-inflammatory cytokines such as IL-4 and IL-10 as compared to LPS stimulated macrophages. Also inhibits the expression of iNOS, TLR2 and transcription factor NF-kappa-B in LPS stimulated macrophages whereas the expression of TLR-4 remains unchanged. This chain is Esterase LipQ, found in Mycobacterium tuberculosis (strain ATCC 25618 / H37Rv).